The chain runs to 334 residues: Beta-hexosaminidase (334 aa).

Residues D60, R68, R133, and 163–164 each bind substrate; that span reads KH. Catalysis depends on H176, which acts as the Proton donor/acceptor. The active-site Nucleophile is the D247.

Belongs to the glycosyl hydrolase 3 family. NagZ subfamily.

It is found in the cytoplasm. It catalyses the reaction Hydrolysis of terminal non-reducing N-acetyl-D-hexosamine residues in N-acetyl-beta-D-hexosaminides.. The protein operates within cell wall biogenesis; peptidoglycan recycling. Its function is as follows. Plays a role in peptidoglycan recycling by cleaving the terminal beta-1,4-linked N-acetylglucosamine (GlcNAc) from peptide-linked peptidoglycan fragments, giving rise to free GlcNAc, anhydro-N-acetylmuramic acid and anhydro-N-acetylmuramic acid-linked peptides. The polypeptide is Beta-hexosaminidase (Xanthomonas oryzae pv. oryzae (strain MAFF 311018)).